The chain runs to 267 residues: NAD kinase 1 (267 aa).

The active-site Proton acceptor is aspartate 45. NAD(+)-binding positions include 45–46 (DG), 122–123 (NE), arginine 149, aspartate 151, and alanine 186.

The protein belongs to the NAD kinase family. The cofactor is a divalent metal cation.

The protein localises to the cytoplasm. The enzyme catalyses NAD(+) + ATP = ADP + NADP(+) + H(+). Its function is as follows. Involved in the regulation of the intracellular balance of NAD and NADP, and is a key enzyme in the biosynthesis of NADP. Catalyzes specifically the phosphorylation on 2'-hydroxyl of the adenosine moiety of NAD to yield NADP. The chain is NAD kinase 1 from Oceanobacillus iheyensis (strain DSM 14371 / CIP 107618 / JCM 11309 / KCTC 3954 / HTE831).